Reading from the N-terminus, the 306-residue chain is Serine/threonine-protein kinase mug51 (306 aa).

The protein belongs to the STK19 family.

The enzyme catalyses L-seryl-[protein] + ATP = O-phospho-L-seryl-[protein] + ADP + H(+). It catalyses the reaction L-threonyl-[protein] + ATP = O-phospho-L-threonyl-[protein] + ADP + H(+). Its function is as follows. Serine/threonine-protein kinase. Has a role in meiosis. The sequence is that of Serine/threonine-protein kinase mug51 (mug51) from Schizosaccharomyces pombe (strain 972 / ATCC 24843) (Fission yeast).